The chain runs to 515 residues: Bifunctional purine biosynthesis protein PurH (515 aa).

The region spanning 1-145 is the MGS-like domain; the sequence is MTKRALISVS…KNHASVTVVV (145 aa).

This sequence belongs to the PurH family.

It catalyses the reaction (6R)-10-formyltetrahydrofolate + 5-amino-1-(5-phospho-beta-D-ribosyl)imidazole-4-carboxamide = 5-formamido-1-(5-phospho-D-ribosyl)imidazole-4-carboxamide + (6S)-5,6,7,8-tetrahydrofolate. It carries out the reaction IMP + H2O = 5-formamido-1-(5-phospho-D-ribosyl)imidazole-4-carboxamide. It participates in purine metabolism; IMP biosynthesis via de novo pathway; 5-formamido-1-(5-phospho-D-ribosyl)imidazole-4-carboxamide from 5-amino-1-(5-phospho-D-ribosyl)imidazole-4-carboxamide (10-formyl THF route): step 1/1. The protein operates within purine metabolism; IMP biosynthesis via de novo pathway; IMP from 5-formamido-1-(5-phospho-D-ribosyl)imidazole-4-carboxamide: step 1/1. This chain is Bifunctional purine biosynthesis protein PurH, found in Streptococcus pyogenes serotype M12 (strain MGAS2096).